A 487-amino-acid polypeptide reads, in one-letter code: Aspartyl/glutamyl-tRNA(Asn/Gln) amidotransferase subunit B (487 aa).

This sequence belongs to the GatB/GatE family. GatB subfamily. In terms of assembly, heterotrimer of A, B and C subunits.

The catalysed reaction is L-glutamyl-tRNA(Gln) + L-glutamine + ATP + H2O = L-glutaminyl-tRNA(Gln) + L-glutamate + ADP + phosphate + H(+). It carries out the reaction L-aspartyl-tRNA(Asn) + L-glutamine + ATP + H2O = L-asparaginyl-tRNA(Asn) + L-glutamate + ADP + phosphate + 2 H(+). Allows the formation of correctly charged Asn-tRNA(Asn) or Gln-tRNA(Gln) through the transamidation of misacylated Asp-tRNA(Asn) or Glu-tRNA(Gln) in organisms which lack either or both of asparaginyl-tRNA or glutaminyl-tRNA synthetases. The reaction takes place in the presence of glutamine and ATP through an activated phospho-Asp-tRNA(Asn) or phospho-Glu-tRNA(Gln). The chain is Aspartyl/glutamyl-tRNA(Asn/Gln) amidotransferase subunit B from Chlamydia caviae (strain ATCC VR-813 / DSM 19441 / 03DC25 / GPIC) (Chlamydophila caviae).